Consider the following 483-residue polypeptide: Glutamyl-tRNA(Gln) amidotransferase subunit A (483 aa).

Residues K76 and S151 each act as charge relay system in the active site. The Acyl-ester intermediate role is filled by S175.

The protein belongs to the amidase family. GatA subfamily. Heterotrimer of A, B and C subunits.

The enzyme catalyses L-glutamyl-tRNA(Gln) + L-glutamine + ATP + H2O = L-glutaminyl-tRNA(Gln) + L-glutamate + ADP + phosphate + H(+). Its function is as follows. Allows the formation of correctly charged Gln-tRNA(Gln) through the transamidation of misacylated Glu-tRNA(Gln) in organisms which lack glutaminyl-tRNA synthetase. The reaction takes place in the presence of glutamine and ATP through an activated gamma-phospho-Glu-tRNA(Gln). This chain is Glutamyl-tRNA(Gln) amidotransferase subunit A, found in Pseudomonas fluorescens (strain ATCC BAA-477 / NRRL B-23932 / Pf-5).